The sequence spans 223 residues: Small ribosomal subunit protein uS3 (223 aa).

The KH type-2 domain maps to 39 to 117 (IREFLRKKPS…RPELNAKLVA (79 aa)).

This sequence belongs to the universal ribosomal protein uS3 family. In terms of assembly, part of the 30S ribosomal subunit. Forms a tight complex with proteins S10 and S14.

In terms of biological role, binds the lower part of the 30S subunit head. Binds mRNA in the 70S ribosome, positioning it for translation. This is Small ribosomal subunit protein uS3 from Chlamydia abortus (strain DSM 27085 / S26/3) (Chlamydophila abortus).